A 91-amino-acid polypeptide reads, in one-letter code: DNA-directed RNA polymerase subunit omega (91 aa).

This sequence belongs to the RNA polymerase subunit omega family. As to quaternary structure, the RNAP catalytic core consists of 2 alpha, 1 beta, 1 beta' and 1 omega subunit. When a sigma factor is associated with the core the holoenzyme is formed, which can initiate transcription.

It carries out the reaction RNA(n) + a ribonucleoside 5'-triphosphate = RNA(n+1) + diphosphate. Promotes RNA polymerase assembly. Latches the N- and C-terminal regions of the beta' subunit thereby facilitating its interaction with the beta and alpha subunits. This chain is DNA-directed RNA polymerase subunit omega, found in Pseudoalteromonas translucida (strain TAC 125).